The following is a 192-amino-acid chain: Thymidine kinase (192 aa).

Residues 9 to 16 (SAMNAGKS) and 87 to 90 (DECQ) contribute to the ATP site. E88 (proton acceptor) is an active-site residue. 4 residues coordinate Zn(2+): C145, C147, C182, and H185.

It belongs to the thymidine kinase family. In terms of assembly, homotetramer.

Its subcellular location is the cytoplasm. The catalysed reaction is thymidine + ATP = dTMP + ADP + H(+). This Aliivibrio fischeri (strain ATCC 700601 / ES114) (Vibrio fischeri) protein is Thymidine kinase.